We begin with the raw amino-acid sequence, 281 residues long: Ribosomal RNA small subunit methyltransferase J (281 aa).

S-adenosyl-L-methionine contacts are provided by residues 129–130 (RD), 145–146 (ER), and D199.

The protein belongs to the methyltransferase superfamily. RsmJ family.

It is found in the cytoplasm. It catalyses the reaction guanosine(1516) in 16S rRNA + S-adenosyl-L-methionine = N(2)-methylguanosine(1516) in 16S rRNA + S-adenosyl-L-homocysteine + H(+). Functionally, specifically methylates the guanosine in position 1516 of 16S rRNA. The protein is Ribosomal RNA small subunit methyltransferase J of Laribacter hongkongensis (strain HLHK9).